A 137-amino-acid polypeptide reads, in one-letter code: MVTLFLSPSCTSCRKARAWLNRHDVVFQEHNIMTSPLSRDELLKILSYTENGTEDIISTRSKVFQKLDIDVDELSVSELINLISKNPSLLRRPIIMDNKRMQIGFNEDEIRAFLPRDYRKQELRQATIRAEVEGEDD.

Cys10 and Cys13 are disulfide-bonded.

It belongs to the ArsC family. Spx subfamily. Interacts with the C-terminal domain of the alpha subunit of the RNAP.

It localises to the cytoplasm. Its function is as follows. Global transcriptional regulator that plays a key role in stress response and exerts either positive or negative regulation of genes. Acts by interacting with the C-terminal domain of the alpha subunit of the RNA polymerase (RNAP). This interaction can enhance binding of RNAP to the promoter region of target genes and stimulate their transcription, or block interaction of RNAP with activator. The sequence is that of Global transcriptional regulator Spx from Streptococcus mutans serotype c (strain ATCC 700610 / UA159).